Consider the following 291-residue polypeptide: MSGEALQRWWHWAQGIIPAPERESGLRELKQFLRAFTGLSPLEITLRRFPPQIHLKLPLTELQERWQRRWQERVPLQYLIGVAHWHDLELVVTPSVLIPRPETEELLAVVAATVPPWQQQGHWLDLGTGSGAIAIGLARLFPAALIHAVDCSSEALEVAQVNIQKYALGDRVRCYVGNWFDPIVPLQGQVQGIVSNPPYIPTSVVATLQPEVQYHEPLLALDGGTDGLQAIRQILETAPEYLQPQGWLFIELMATQGKAVAALAMATQAYERVEILRDLSGHDRFLLAQTP.

S-adenosyl-L-methionine-binding positions include 127–131 (GTGSG), Asp-150, Trp-179, and Asn-196. Substrate is bound at residue 196–199 (NPPY).

It belongs to the protein N5-glutamine methyltransferase family. PrmC subfamily.

It catalyses the reaction L-glutaminyl-[peptide chain release factor] + S-adenosyl-L-methionine = N(5)-methyl-L-glutaminyl-[peptide chain release factor] + S-adenosyl-L-homocysteine + H(+). Its function is as follows. Methylates the class 1 translation termination release factors RF1/PrfA and RF2/PrfB on the glutamine residue of the universally conserved GGQ motif. In Thermosynechococcus vestitus (strain NIES-2133 / IAM M-273 / BP-1), this protein is Release factor glutamine methyltransferase.